A 289-amino-acid polypeptide reads, in one-letter code: Iodotyrosine deiodinase 1 (289 aa).

Residues 1 to 21 traverse the membrane as a helical segment; it reads MYFLTPILVAILCILVVWIFK. Basic and acidic residues predominate over residues 29–58; the sequence is KKKGEPRTRAEARPWVDEDLKDSSDLHQAE. The tract at residues 29-69 is disordered; the sequence is KKKGEPRTRAEARPWVDEDLKDSSDLHQAEEDADEWQESEE. Residues 59-69 are compositionally biased toward acidic residues; it reads EDADEWQESEE. FMN contacts are provided by residues 100 to 104, serine 128, and 128 to 129; these read RRSVR and SG. 4 residues coordinate 3-iodo-L-tyrosine: alanine 130, glutamate 157, tyrosine 161, and lysine 182. Residues 237–239 and arginine 279 contribute to the FMN site; that span reads TTT.

The protein belongs to the nitroreductase family. Homodimer. FMN serves as cofactor. In terms of tissue distribution, expressed at a high level in thyroid gland (at protein level). Expressed at a high level in thyroid gland and at lower level in kidney and trachea.

The protein resides in the cell membrane. Its subcellular location is the cytoplasmic vesicle membrane. The enzyme catalyses 2 iodide + L-tyrosine + 2 NADP(+) = 3,5-diiodo-L-tyrosine + 2 NADPH + H(+). It carries out the reaction iodide + L-tyrosine + NADP(+) = 3-iodo-L-tyrosine + NADPH. The catalysed reaction is 3-iodo-L-tyrosine + iodide + NADP(+) = 3,5-diiodo-L-tyrosine + NADPH + H(+). It catalyses the reaction L-tyrosine + chloride + NADP(+) = 3-chloro-L-tyrosine + NADPH. The enzyme catalyses bromide + L-tyrosine + NADP(+) = 3-bromo-L-tyrosine + NADPH. Its function is as follows. Catalyzes the dehalogenation of halotyrosines such as 3-bromo-L-tyrosine, 3-chloro-L-tyrosine, 3-iodo-L-tyrosine and 3,5-diiodo-L-tyrosine. During thyroid hormone biosynthesis, facilitates iodide salvage by catalysing the oxidative NADPH-dependent deiodination of the halogenated by-products of thyroid hormone production, monoiodotyrosine (L-MIT) and diiodotyrosine (L-DIT). The scavanged iodide can then reenter the hormone-producing pathways. Acts more efficiently on 3-iodo-L-tyrosine than 3,5-diiodo-L-tyrosine. The polypeptide is Iodotyrosine deiodinase 1 (Homo sapiens (Human)).